A 205-amino-acid polypeptide reads, in one-letter code: Probable GTP-binding protein EngB (205 aa).

An EngB-type G domain is found at 27 to 201 (QGMEVAFAGR…QNKLNAWFSG (175 aa)). GTP is bound by residues 35 to 42 (GRSNAGKS), 62 to 66 (GRTQL), 80 to 83 (DLPG), 147 to 150 (TKVD), and 180 to 182 (FSS). Residues Ser42 and Thr64 each contribute to the Mg(2+) site.

It belongs to the TRAFAC class TrmE-Era-EngA-EngB-Septin-like GTPase superfamily. EngB GTPase family. The cofactor is Mg(2+).

Its function is as follows. Necessary for normal cell division and for the maintenance of normal septation. This Hamiltonella defensa subsp. Acyrthosiphon pisum (strain 5AT) protein is Probable GTP-binding protein EngB.